We begin with the raw amino-acid sequence, 890 residues long: Translation initiation factor IF-2 (890 aa).

Residues leucine 45–glutamine 304 form a disordered region. The segment covering serine 67–valine 81 has biased composition (polar residues). Residues valine 92 to aspartate 217 show a composition bias toward basic and acidic residues. Residues glycine 252–asparagine 266 show a composition bias toward basic residues. Residues lysine 267–alanine 280 are compositionally biased toward basic and acidic residues. The tr-type G domain maps to proline 389–lysine 558. Positions glycine 398 to threonine 405 are G1. Residue glycine 398 to threonine 405 coordinates GTP. Positions glycine 423–histidine 427 are G2. The G3 stretch occupies residues aspartate 444–glycine 447. GTP-binding positions include aspartate 444 to histidine 448 and asparagine 498 to aspartate 501. The G4 stretch occupies residues asparagine 498–aspartate 501. Residues serine 534–lysine 536 are G5. The residue at position 808 (lysine 808) is an N6-acetyllysine.

This sequence belongs to the TRAFAC class translation factor GTPase superfamily. Classic translation factor GTPase family. IF-2 subfamily.

Its subcellular location is the cytoplasm. In terms of biological role, one of the essential components for the initiation of protein synthesis. Protects formylmethionyl-tRNA from spontaneous hydrolysis and promotes its binding to the 30S ribosomal subunits. Also involved in the hydrolysis of GTP during the formation of the 70S ribosomal complex. The protein is Translation initiation factor IF-2 of Escherichia coli (strain SMS-3-5 / SECEC).